The chain runs to 251 residues: MSLAVRVIPCLDVDNGRVVKGVNFQNLRDAGDPVEMAKLYDAEGADELTFLDITASSGDRETTYDVVRRTAEQVFIPLTVGGGVRTPDDVDKLLRAGADKVGVNTAAIARPDLIREIAERFGRQVLVLSVDARRTPEGTFEVTTHGGRKGTGIDAVEWAHRAAELGAGEILLNSMDADGTKDGYDTEMIEAVRKHVTVPVIASGGAGRLADFAPAIEAGADAVLAASVFHFGDLRILEVKGALREAGHPVR.

Active-site residues include D12 and D131.

Belongs to the HisA/HisF family. As to quaternary structure, heterodimer of HisH and HisF.

It localises to the cytoplasm. It carries out the reaction 5-[(5-phospho-1-deoxy-D-ribulos-1-ylimino)methylamino]-1-(5-phospho-beta-D-ribosyl)imidazole-4-carboxamide + L-glutamine = D-erythro-1-(imidazol-4-yl)glycerol 3-phosphate + 5-amino-1-(5-phospho-beta-D-ribosyl)imidazole-4-carboxamide + L-glutamate + H(+). It functions in the pathway amino-acid biosynthesis; L-histidine biosynthesis; L-histidine from 5-phospho-alpha-D-ribose 1-diphosphate: step 5/9. In terms of biological role, IGPS catalyzes the conversion of PRFAR and glutamine to IGP, AICAR and glutamate. The HisF subunit catalyzes the cyclization activity that produces IGP and AICAR from PRFAR using the ammonia provided by the HisH subunit. This chain is Imidazole glycerol phosphate synthase subunit HisF, found in Streptomyces griseus subsp. griseus (strain JCM 4626 / CBS 651.72 / NBRC 13350 / KCC S-0626 / ISP 5235).